We begin with the raw amino-acid sequence, 225 residues long: Prolactin (225 aa).

The N-terminal stretch at 1–28 (MTIQGSDRKGTLLLLVMSNLLFCQNVHP) is a signal peptide. C32 and C37 are joined by a disulfide. S52 and S116 each carry phosphoserine. Intrachain disulfides connect C84-C200 and C217-C225.

Belongs to the somatotropin/prolactin family. Interacts with PRLR.

It is found in the secreted. Functionally, prolactin acts primarily on the mammary gland by promoting lactation. The polypeptide is Prolactin (PRL) (Alexandromys montebelli (Japanese grass vole)).